The following is a 348-amino-acid chain: Dihydroorotase (348 aa).

Positions 17 and 19 each coordinate Zn(2+). Residues 19–21 and Asn-45 contribute to the substrate site; that span reads HLR. Zn(2+) is bound by residues Lys-103, His-140, and His-178. The residue at position 103 (Lys-103) is an N6-carboxylysine. Residue His-140 coordinates substrate. Leu-223 lines the substrate pocket. Asp-251 provides a ligand contact to Zn(2+). Asp-251 is an active-site residue. Substrate is bound by residues His-255 and Ala-267.

This sequence belongs to the metallo-dependent hydrolases superfamily. DHOase family. Class II DHOase subfamily. Homodimer. It depends on Zn(2+) as a cofactor.

The enzyme catalyses (S)-dihydroorotate + H2O = N-carbamoyl-L-aspartate + H(+). The protein operates within pyrimidine metabolism; UMP biosynthesis via de novo pathway; (S)-dihydroorotate from bicarbonate: step 3/3. Its function is as follows. Catalyzes the reversible cyclization of carbamoyl aspartate to dihydroorotate. The polypeptide is Dihydroorotase (Shigella flexneri serotype 5b (strain 8401)).